A 357-amino-acid polypeptide reads, in one-letter code: Actin, macronuclear (357 aa).

It belongs to the actin family. Met-1 may be removed after translation.

It is found in the cytoplasm. The protein resides in the cytoskeleton. The catalysed reaction is ATP + H2O = ADP + phosphate + H(+). In terms of biological role, actins are highly conserved proteins that are involved in various types of cell motility and are ubiquitously expressed in all eukaryotic cells. The polypeptide is Actin, macronuclear (Oxytricha fallax).